A 198-amino-acid polypeptide reads, in one-letter code: Recombination protein RecR (198 aa).

A C4-type zinc finger spans residues 56 to 71; the sequence is CTECRDFSETKICAIC. The Toprim domain maps to 79–174; that stretch reads HQLCVVESPP…RPSRLAQGLP (96 aa).

The protein belongs to the RecR family.

Its function is as follows. May play a role in DNA repair. It seems to be involved in an RecBC-independent recombinational process of DNA repair. It may act with RecF and RecO. The polypeptide is Recombination protein RecR (Xylella fastidiosa (strain Temecula1 / ATCC 700964)).